The primary structure comprises 227 residues: PKHD-type hydroxylase Veis_3084 (227 aa).

Positions 27–51 (DDGKDSAGTQARQAKNNQQLPRDSE) are disordered. The segment covering 33–47 (AGTQARQAKNNQQLP) has biased composition (polar residues). In terms of domain architecture, Fe2OG dioxygenase spans 78 to 179 (RVFPPRVNRY…RMACFFWVES (102 aa)). Residues H97, D99, and H160 each contribute to the Fe cation site. R170 is a 2-oxoglutarate binding site.

Requires Fe(2+) as cofactor. The cofactor is L-ascorbate.

The protein is PKHD-type hydroxylase Veis_3084 of Verminephrobacter eiseniae (strain EF01-2).